The following is a 272-amino-acid chain: 5'-nucleotidase SurE (272 aa).

Residues Asp28, Asp29, Ser59, and Asn115 each coordinate a divalent metal cation.

The protein belongs to the SurE nucleotidase family. A divalent metal cation serves as cofactor.

The protein localises to the cytoplasm. It catalyses the reaction a ribonucleoside 5'-phosphate + H2O = a ribonucleoside + phosphate. Nucleotidase that shows phosphatase activity on nucleoside 5'-monophosphates. The chain is 5'-nucleotidase SurE from Chlorobium chlorochromatii (strain CaD3).